The primary structure comprises 389 residues: Na(+)/H(+) antiporter NhaA 1 (389 aa).

Transmembrane regions (helical) follow at residues 12-32, 62-82, 97-117, 128-148, 157-177, 184-204, 220-240, 260-280, 282-302, 331-351, and 365-385; these read VLNE…ALLV, FLLW…GLEL, IVLP…LFAL, GWAI…MMCG, IFLL…IAIF, IAAF…NLLG, ISVL…AFFI, FWIA…VNLS, IDIG…LFVG, LYGV…IDGL, and LAIL…LKFF.

It belongs to the NhaA Na(+)/H(+) (TC 2.A.33) antiporter family.

It is found in the cell inner membrane. It carries out the reaction Na(+)(in) + 2 H(+)(out) = Na(+)(out) + 2 H(+)(in). Na(+)/H(+) antiporter that extrudes sodium in exchange for external protons. The chain is Na(+)/H(+) antiporter NhaA 1 from Campylobacter jejuni subsp. jejuni serotype O:2 (strain ATCC 700819 / NCTC 11168).